Here is a 194-residue protein sequence, read N- to C-terminus: Nucleoside triphosphate pyrophosphatase (194 aa).

Asp-71 functions as the Proton acceptor in the catalytic mechanism.

The protein belongs to the Maf family. A divalent metal cation is required as a cofactor.

The protein localises to the cytoplasm. It carries out the reaction a ribonucleoside 5'-triphosphate + H2O = a ribonucleoside 5'-phosphate + diphosphate + H(+). The catalysed reaction is a 2'-deoxyribonucleoside 5'-triphosphate + H2O = a 2'-deoxyribonucleoside 5'-phosphate + diphosphate + H(+). In terms of biological role, nucleoside triphosphate pyrophosphatase. May have a dual role in cell division arrest and in preventing the incorporation of modified nucleotides into cellular nucleic acids. This Paramagnetospirillum magneticum (strain ATCC 700264 / AMB-1) (Magnetospirillum magneticum) protein is Nucleoside triphosphate pyrophosphatase.